The chain runs to 146 residues: D-aminoacyl-tRNA deacylase (146 aa).

Residues 138–139 carry the Gly-cisPro motif, important for rejection of L-amino acids motif; that stretch reads GP.

It belongs to the DTD family. Homodimer.

It localises to the cytoplasm. It carries out the reaction glycyl-tRNA(Ala) + H2O = tRNA(Ala) + glycine + H(+). It catalyses the reaction a D-aminoacyl-tRNA + H2O = a tRNA + a D-alpha-amino acid + H(+). Functionally, an aminoacyl-tRNA editing enzyme that deacylates mischarged D-aminoacyl-tRNAs. Also deacylates mischarged glycyl-tRNA(Ala), protecting cells against glycine mischarging by AlaRS. Acts via tRNA-based rather than protein-based catalysis; rejects L-amino acids rather than detecting D-amino acids in the active site. By recycling D-aminoacyl-tRNA to D-amino acids and free tRNA molecules, this enzyme counteracts the toxicity associated with the formation of D-aminoacyl-tRNA entities in vivo and helps enforce protein L-homochirality. The polypeptide is D-aminoacyl-tRNA deacylase (Xanthomonas axonopodis pv. citri (strain 306)).